We begin with the raw amino-acid sequence, 119 residues long: Small ribosomal subunit protein bS16 (119 aa).

Belongs to the bacterial ribosomal protein bS16 family.

The chain is Small ribosomal subunit protein bS16 from Chlamydia caviae (strain ATCC VR-813 / DSM 19441 / 03DC25 / GPIC) (Chlamydophila caviae).